The primary structure comprises 244 residues: Venom nerve growth factor 2 (244 aa).

Residues 1-18 (MSMLCYTLIIAFLIGTWA) form the signal peptide. Positions 19–125 (APKSEDNVPL…TLNRNIRAKR (107 aa)) are excised as a propeptide. Residues 47-66 (GLKTSRNTDQRHPAPKKAED) show a composition bias toward basic and acidic residues. The segment at 47-67 (GLKTSRNTDQRHPAPKKAEDQ) is disordered. Disulfide bonds link cysteine 139–cysteine 205, cysteine 181–cysteine 233, and cysteine 193–cysteine 235.

This sequence belongs to the NGF-beta family. As to quaternary structure, homodimer; non-covalently linked. Expressed by the venom gland.

The protein localises to the secreted. Its function is as follows. Nerve growth factor is important for the development and maintenance of the sympathetic and sensory nervous systems. It stimulates division and differentiation of sympathetic and embryonic sensory neurons as well as basal forebrain cholinergic neurons in the brain. Its relevance in the snake venom is not clear. However, it has been shown to inhibit metalloproteinase-dependent proteolysis of platelet glycoprotein Ib alpha, suggesting a metalloproteinase inhibition to prevent metalloprotease autodigestion and/or protection against prey proteases. Binds a lipid between the two protein chains in the homodimer. The lipid-bound form promotes histamine relase from mouse mast cells, contrary to the lipid-free form. In Tropidechis carinatus (Australian rough-scaled snake), this protein is Venom nerve growth factor 2.